Consider the following 206-residue polypeptide: Small ribosomal subunit protein uS4 (206 aa).

The S4 RNA-binding domain occupies 96 to 156 (GRLDNVVYRM…EKSKKQARIK (61 aa)).

It belongs to the universal ribosomal protein uS4 family. In terms of assembly, part of the 30S ribosomal subunit. Contacts protein S5. The interaction surface between S4 and S5 is involved in control of translational fidelity.

In terms of biological role, one of the primary rRNA binding proteins, it binds directly to 16S rRNA where it nucleates assembly of the body of the 30S subunit. Functionally, with S5 and S12 plays an important role in translational accuracy. The sequence is that of Small ribosomal subunit protein uS4 from Actinobacillus succinogenes (strain ATCC 55618 / DSM 22257 / CCUG 43843 / 130Z).